The following is a 301-amino-acid chain: Phosphatidylserine decarboxylase proenzyme (301 aa).

Residues D115, H171, and S258 each act as charge relay system; for autoendoproteolytic cleavage activity in the active site. S258 serves as the catalytic Schiff-base intermediate with substrate; via pyruvic acid; for decarboxylase activity. A Pyruvic acid (Ser); by autocatalysis modification is found at S258.

It belongs to the phosphatidylserine decarboxylase family. PSD-B subfamily. Prokaryotic type II sub-subfamily. In terms of assembly, heterodimer of a large membrane-associated beta subunit and a small pyruvoyl-containing alpha subunit. Pyruvate serves as cofactor. Post-translationally, is synthesized initially as an inactive proenzyme. Formation of the active enzyme involves a self-maturation process in which the active site pyruvoyl group is generated from an internal serine residue via an autocatalytic post-translational modification. Two non-identical subunits are generated from the proenzyme in this reaction, and the pyruvate is formed at the N-terminus of the alpha chain, which is derived from the carboxyl end of the proenzyme. The autoendoproteolytic cleavage occurs by a canonical serine protease mechanism, in which the side chain hydroxyl group of the serine supplies its oxygen atom to form the C-terminus of the beta chain, while the remainder of the serine residue undergoes an oxidative deamination to produce ammonia and the pyruvoyl prosthetic group on the alpha chain. During this reaction, the Ser that is part of the protease active site of the proenzyme becomes the pyruvoyl prosthetic group, which constitutes an essential element of the active site of the mature decarboxylase.

The protein localises to the cell membrane. The catalysed reaction is a 1,2-diacyl-sn-glycero-3-phospho-L-serine + H(+) = a 1,2-diacyl-sn-glycero-3-phosphoethanolamine + CO2. It functions in the pathway phospholipid metabolism; phosphatidylethanolamine biosynthesis; phosphatidylethanolamine from CDP-diacylglycerol: step 2/2. Functionally, catalyzes the formation of phosphatidylethanolamine (PtdEtn) from phosphatidylserine (PtdSer). This is Phosphatidylserine decarboxylase proenzyme from Chlamydia pneumoniae (Chlamydophila pneumoniae).